The following is a 601-amino-acid chain: HIRA-interacting protein 3 (601 aa).

Disordered regions lie at residues 60-469 and 546-601; these read KMQA…EDHP and STGR…GDSS. Positions 66–76 are enriched in basic and acidic residues; that stretch reads GTREGKPDFIK. Phosphoserine is present on residues S85, S96, and S98. Positions 97-113 are enriched in low complexity; sequence ESESSSSPSSPDGSGPS. Positions 117–129 are enriched in basic residues; it reads RTTKKTCLRRALK. The span at 130-149 shows a compositional bias: basic and acidic residues; sequence KAVESTDEDHQTDLDAKMGL. S134 is subject to Phosphoserine. Residues T135 and T141 each carry the phosphothreonine modification. Phosphoserine is present on residues S152, S153, and S163. T167 is modified (phosphothreonine). Over residues 186–205 the composition is skewed to basic and acidic residues; that stretch reads GAKDKQVPLKADRKQVREES. Residues S205, S207, S208, S231, S234, S238, S313, S359, S360, S384, and S389 each carry the phosphoserine modification. 2 stretches are compositionally biased toward basic and acidic residues: residues 238–264 and 313–324; these read SPAKKKELSEPRSRSNRAERTARERKS and SSEKGEAEKEEG. A compositionally biased stretch (polar residues) spans 347 to 378; it reads RTQTESGRRQNTSSRDDSNSTQEQAAAQGTTK. Residues 379 to 388 show a composition bias toward low complexity; it reads SGSLGSSNGD. T391 bears the Phosphothreonine mark. Phosphoserine is present on residues S396 and S398. Residues 413–432 show a composition bias toward low complexity; sequence SNKSSKNGQARSCSSSSDSS. An interaction with the histone H2A-H2B complex region spans residues 429-572; the sequence is SDSSPEPTGQ…TSPGETYRRT (144 aa). Positions 556–566 are enriched in polar residues; it reads WNPSGEGTSPG. Phosphoserine is present on residues S564, S575, S595, S596, and S600. A compositionally biased stretch (basic and acidic residues) spans 568-580; the sequence is TYRRTLDSEEEQP.

As to quaternary structure, interacts (via C-terminus) with histone H2A-H2B dimers; the interaction is direct. Interacts with HIRA. Interacts with CK2. In terms of processing, phosphorylated by CK2.

It is found in the nucleus. In terms of biological role, histone chaperone that carries a H2A-H2B histone complex and facilitates its deposition onto chromatin. This Mus musculus (Mouse) protein is HIRA-interacting protein 3.